Consider the following 378-residue polypeptide: Stimulator of interferon genes protein (378 aa).

The Cytoplasmic segment spans residues 1-17 (MPYSNLHPAIPRPRGHR). Residues 1–189 (MPYSNLHPAI…MFNQLHNNML (189 aa)) are mediates interaction with ZDHHC1 and ZDHHC11. A helical membrane pass occupies residues 18 to 34 (SKYVALIFLVASLMILW). Residue Lys-19 forms a Glycyl lysine isopeptide (Lys-Gly) (interchain with G-Cter in ubiquitin) linkage. The Lumenal segment spans residues 35-44 (VAKDPPNHTL). Residues 45 to 69 (KYLALHLASHELGLLLKNLCCLAEE) form a helical membrane-spanning segment. Over 70–91 (LCHVQSRYQGSYWKAVRACLGC) the chain is Cytoplasmic. 2 S-palmitoyl cysteine lipidation sites follow: Cys-88 and Cys-91. Residues 92–106 (PIHCMAMILLSSYFY) form a helical membrane-spanning segment. Topologically, residues 107–115 (FLQNTADIY) are lumenal. The chain crosses the membrane as a helical span at residues 116 to 133 (LSWMFGLLVLYKSLSMLL). Over 134 to 378 (GLQSLTPAEV…QPLPLRTDLI (245 aa)) the chain is Cytoplasmic. Lys-150 is covalently cross-linked (Glycyl lysine isopeptide (Lys-Gly) (interchain with G-Cter in ubiquitin)). Residues 152 to 339 (LNVAHGLAWS…RHIRQEEKEE (188 aa)) are cyclic dinucleotide-binding domain (CBD). 3',3'-c-di-GMP is bound at residue Gly-165. Tyr-166 is a 2',3'-cUAMP binding site. Residue Tyr-166 coordinates 3',3'-cGAMP. A Glycyl lysine isopeptide (Lys-Gly) (interchain with G-Cter in ubiquitin) cross-link involves residue Lys-235. Arg-237 lines the 2',3'-cUAMP pocket. Arg-237 lines the 3',3'-cGAMP pocket. Position 237 (Arg-237) interacts with 2',3'-cGAMP. Residues 237–240 (RVYS) and Thr-262 each bind 3',3'-c-di-GMP. Ser-240 carries the post-translational modification Phosphoserine. Thr-262 contributes to the 2',3'-cUAMP binding site. Thr-262 provides a ligand contact to 2',3'-cGAMP. Residue Lys-337 forms a Glycyl lysine isopeptide (Lys-Gly) (interchain with G-Cter in SUMO) linkage. The segment at 339 to 378 (EVTMNAPMTSVAPPPSVLSQEPRLLISGMDQPLPLRTDLI) is C-terminal tail (CTT). Ser-354 carries the phosphoserine; by MAP3K7 modification. Phosphoserine; by TBK1 is present on residues Ser-357 and Ser-365. The pLxIS motif motif lies at 362–365 (LLIS).

Belongs to the STING family. Homodimer; forms a homodimer in absence of cyclic nucleotide (c-di-GMP or cGAMP); 'Lys-63'-linked ubiquitination at Lys-150 is required for homodimerization. Homotetramer; in presence of cyclic nucleotide (c-di-GMP or cGAMP), forms tetramers and higher-order oligomers through side-by-side packing. Interacts (when phosphorylated) with IRF3; following activation and phosphorylation on the pLxIS motif by TBK1, recruits IRF3. Interacts with RIGI, MAVS and SSR2. Interacts with RNF5 and TRIM56. Interacts with TBK1; when homodimer, leading to subsequent production of IFN-beta. Interacts with IFIT1 and IFIT2. Interacts with TRIM29; this interaction induces STING1 ubiquitination and subsequent degradation. Associates with the MHC-II complex. Interacts with STEEP1; interaction takes place upon cGAMP-activation and STING1 phosphorylation by MAP3K7/TAK1 and promotes STING1 translocation to COPII vesicles. Interacts with SEC24A, SEC24B and SEC24C; promoting translocation to COPII vesicles. Interacts (when ubiquitinated) with SQSTM1; leading to relocalization to autophagosomes. Interacts with SURF4. Interacts with HNRNPA2B1. Interacts with ZDHHC1; ZDHHC1 constitutively interacts with STING1 and in presence of DNA viruses activates it by promoting its cGAMP-induced oligomerization and the recruitment of downstream signaling components. Interacts with ZDHHC11; in presence of DNA viruses promotes the recruitment of IRF3 to STING1. Interacts with TOMM70. Interacts with IFI204. Interacts with TAB1; promoting recruitment of TAB1 to the endoplasmic reticulum membrane and subsequent activation of MAP3K7/TAK1. Interacts (via transmembrane domain) with TMEM203. Interacts with DDX41. Post-translationally, phosphorylation by TBK1 leads to activation and production of IFN-beta. Following cyclic nucleotide (c-di-GMP or cGAMP)-binding, activation and translocation from the endoplasmic reticulum, STING1 is phosphorylated by TBK1 at Ser-365 in the pLxIS motif. The phosphorylated pLxIS motif constitutes an IRF3-binding motif, leading to recruitment of the transcription factor IRF3 to induce type-I interferons and other cytokines. The phosphorylated pLxIS motif facilitates SENP2 recruitment during late phase of viral infection. Phosphorylated on tyrosine residues upon MHC-II aggregation. Dephosphorylation by PPP6C leads to inactivation and decreased production of IFN-beta. Phosphorylation at Ser-357 is also required to activate IRF3. Phosphorylation at Ser-354 by MAP3K7/TAK1 facilitates its interaction with STEEP1, promoting STING1 translocation to COPII vesicles. In terms of processing, ubiquitinated. Ubiquitinated via 'Lys-63'-linked ubiquitin chains in response to double-stranded DNA treatment, leading to relocalization to autophagosomes and subsequent degradation; this process is dependent on SQSTM1. 'Lys-63'-linked ubiquitination mediated by TRIM56 at Lys-150 promotes homodimerization and recruitment of the antiviral kinase TBK1 and subsequent production of IFN-beta. 'Lys-48'-linked polyubiquitination at Lys-150 occurring after viral infection is mediated by RNF5 and leads to proteasomal degradation. 'Lys-11'-linked polyubiquitination at Lys-150 by RNF26 leads to stabilize STING1: it protects STING1 from RNF5-mediated 'Lys-48'-linked polyubiquitination. 'Lys-33'-linked and 'Lys-48'-linked deubiquitinated by USP20; leading to its stabilization and promotion of innate antiviral response. 'Lys-48'-linked deubiquitinated by USP44; leading to its stabilization and promotion of innate antiviral response. Deubiquitinated by USP13; leading to inhibition of innate antiviral response. 'Lys-63'-linked deubiquitinated by USP49; leading to inhibition of the subsequent recruitment of TBK1 to the signaling complex. 'Lys-63'-linked ubiquitination mediated by RNF39 promotes the activation of the cGAS-STING pathway. MARCHF5-mediated ubiquitination prevents the oxidation-induced polymer formation. Sumoylated at Lys-337 by TRIM38 during the early phase of viral infection, promoting its stability by preventing its relocalization to autophagosomes and subsequent degradation. Desumoylated by SENP2 during the late phase of viral infection. Post-translationally, palmitoylation takes place in the Golgi apparatus and creates a platform for the recruitment of TBK1. In terms of tissue distribution, present in spleen and thymus tissue. Also present in dendritic cells (at protein level).

Its subcellular location is the endoplasmic reticulum membrane. The protein resides in the cytoplasm. The protein localises to the perinuclear region. It is found in the endoplasmic reticulum-Golgi intermediate compartment membrane. It localises to the golgi apparatus membrane. Its subcellular location is the cytoplasmic vesicle. The protein resides in the autophagosome membrane. The protein localises to the mitochondrion outer membrane. It is found in the cell membrane. It localises to the lysosome membrane. The enzyme catalyses H(+)(in) = H(+)(out). Its activity is regulated as follows. Activated by anticancer drug 5,6-dimethylxanthenone 4-acetic acid (DMXAA). Specifically inhibited by nitrofuran derivatives C-178 and C-176, which covalently bind Cys-91 and prevent palmitoylation and subsequent activation od STING1. Facilitator of innate immune signaling that acts as a sensor of cytosolic DNA from bacteria and viruses and promotes the production of type I interferon (IFN-alpha and IFN-beta). Innate immune response is triggered in response to non-CpG double-stranded DNA from viruses and bacteria delivered to the cytoplasm. Acts by binding cyclic dinucleotides: recognizes and binds cyclic di-GMP (c-di-GMP), a second messenger produced by bacteria, cyclic UMP-AMP (2',3'-cUAMP), and cyclic GMP-AMP (cGAMP), a messenger produced by CGAS in response to DNA virus in the cytosol. Upon binding to c-di-GMP, cUAMP or cGAMP, STING1 oligomerizes, translocates from the endoplasmic reticulum and is phosphorylated by TBK1 on the pLxIS motif, leading to recruitment and subsequent activation of the transcription factor IRF3 to induce expression of type I interferon and exert a potent anti-viral state. Exhibits 2',3' phosphodiester linkage-specific ligand recognition: can bind both 2'-3' linked cGAMP (2'-3'-cGAMP) and 3'-3' linked cGAMP but is preferentially activated by 2'-3' linked cGAMP. The preference for 2'-3'-cGAMP, compared to other linkage isomers is probably due to the ligand itself, whichs adopts an organized free-ligand conformation that resembles the STING1-bound conformation and pays low energy costs in changing into the active conformation. In addition to promote the production of type I interferons, plays a direct role in autophagy. Following cGAMP-binding, STING1 buds from the endoplasmic reticulum into COPII vesicles, which then form the endoplasmic reticulum-Golgi intermediate compartment (ERGIC). The ERGIC serves as the membrane source for WIPI2 recruitment and LC3 lipidation, leading to formation of autophagosomes that target cytosolic DNA or DNA viruses for degradation by the lysosome. Promotes autophagy by acting as a proton channel that directs proton efflux from the Golgi to facilitate MAP1LC3B/LC3B lipidation. The autophagy- and interferon-inducing activities can be uncoupled and autophagy induction is independent of TBK1 phosphorylation. Autophagy is also triggered upon infection by bacteria: following c-di-GMP-binding, which is produced by live Gram-positive bacteria, promotes reticulophagy. May be involved in translocon function, the translocon possibly being able to influence the induction of type I interferons. May be involved in transduction of apoptotic signals via its association with the major histocompatibility complex class II (MHC-II). The polypeptide is Stimulator of interferon genes protein (Mus musculus (Mouse)).